An 838-amino-acid chain; its full sequence is Periplasmic nitrate reductase (838 aa).

A signal peptide (tat-type signal) is located at residues 1–29 (MKVSRRAFIKQTAAAATASVAGVTLPAGA). Positions 41–97 (LKWSKAPCRFCGTGCGVEVAVKDNRVVATQGDPKAEVNRGLNCVKGYFLSKIMYGKD) constitute a 4Fe-4S Mo/W bis-MGD-type domain. Cysteine 48, cysteine 51, cysteine 55, and cysteine 83 together coordinate [4Fe-4S] cluster. Mo-bis(molybdopterin guanine dinucleotide)-binding positions include lysine 85, glutamine 152, asparagine 177, cysteine 181, 214–221 (WGSNMAEM), 245–249 (STFTH), methionine 382, glutamine 386, asparagine 492, 518–519 (SD), lysine 541, aspartate 568, and 728–737 (TGRVLEHWHS). A substrate-binding site is contributed by tryptophan 804. Mo-bis(molybdopterin guanine dinucleotide)-binding residues include asparagine 812 and lysine 829.

Belongs to the prokaryotic molybdopterin-containing oxidoreductase family. NasA/NapA/NarB subfamily. In terms of assembly, component of the periplasmic nitrate reductase NapAB complex composed of NapA and NapB. Requires [4Fe-4S] cluster as cofactor. Mo-bis(molybdopterin guanine dinucleotide) serves as cofactor. Post-translationally, predicted to be exported by the Tat system. The position of the signal peptide cleavage has not been experimentally proven.

The protein localises to the periplasm. It catalyses the reaction 2 Fe(II)-[cytochrome] + nitrate + 2 H(+) = 2 Fe(III)-[cytochrome] + nitrite + H2O. In terms of biological role, catalytic subunit of the periplasmic nitrate reductase complex NapAB. Receives electrons from NapB and catalyzes the reduction of nitrate to nitrite. The chain is Periplasmic nitrate reductase from Ralstonia pickettii (strain 12J).